The chain runs to 877 residues: Protein SEY1 homolog (877 aa).

The Cytoplasmic segment spans residues 1-735; that stretch reads MVAFAGGART…LRSIEGEKQN (735 aa). The 259-residue stretch at 49–307 folds into the GB1/RHD3-type G domain; sequence GITYHVVGVL…VPLDGIPSYL (259 aa). Position 59 to 66 (59 to 66) interacts with GTP; sequence GGQSSGKS. Residues 388-410 adopt a coiled-coil conformation; sequence RIDIVRKTEAELEEELLKVELKL. Residues 736–756 traverse the membrane as a helical segment; sequence LPAWVLPVLLLLGWNEIWYVL. The Lumenal segment spans residues 757–759; it reads SSP. The helical transmembrane segment at 760-780 threads the bilayer; the sequence is VLLVVVVIIAAVFLRGFLLTQ. The Cytoplasmic portion of the chain corresponds to 781-877; that stretch reads WAIFEETGPT…KEEEVPTQKE (97 aa). Positions 850–877 are disordered; sequence PTVLPPSTTSATLTRRLKKEEEVPTQKE. Over residues 867 to 877 the composition is skewed to basic and acidic residues; the sequence is KKEEEVPTQKE.

It belongs to the TRAFAC class dynamin-like GTPase superfamily. GB1/RHD3 GTPase family. RHD3 subfamily.

The protein localises to the endoplasmic reticulum membrane. Probable GTP-binding protein that may be involved in cell development. The protein is Protein SEY1 homolog of Trypanosoma cruzi (strain CL Brener).